Consider the following 345-residue polypeptide: DNA N(6)-methyladenine demethylase ALKBH1A (345 aa).

Substrate-binding positions include W179 and 186 to 188 (FDW). Residues 225–345 (RPEGAIVNYF…RININIRQVF (121 aa)) form the Fe2OG dioxygenase domain. 2-oxoglutarate is bound at residue 232-234 (NYF). The Fe cation site is built by H243, D245, and H299. Residue 336 to 342 (RININIR) coordinates 2-oxoglutarate.

The protein belongs to the alkB family. Requires Fe(2+) as cofactor. Mostly expressed in siliques, to a lower extent in roots, seedlings and rosette leaves, but barely in cauline leaves, stems and flowers.

The protein resides in the nucleus. The protein localises to the cytoplasm. The catalysed reaction is an N(6)-methyl-2'-deoxyadenosine in DNA + 2-oxoglutarate + O2 = a 2'-deoxyadenosine in DNA + formaldehyde + succinate + CO2. In terms of biological role, dioxygenase that catalyzes DNA N(6)-methyladenine (6 mA) demethylation to modulate gene expression and regulate seed germination. In Arabidopsis thaliana (Mouse-ear cress), this protein is DNA N(6)-methyladenine demethylase ALKBH1A.